We begin with the raw amino-acid sequence, 95 residues long: Small ribosomal subunit protein bS6 (95 aa).

The protein belongs to the bacterial ribosomal protein bS6 family.

Functionally, binds together with bS18 to 16S ribosomal RNA. The polypeptide is Small ribosomal subunit protein bS6 (Corynebacterium jeikeium (strain K411)).